The following is a 317-amino-acid chain: Lipoyl synthase (317 aa).

The tract at residues 1–28 (MDSQPQSKKAARGADKTARNPIPIIPAP) is disordered. The [4Fe-4S] cluster site is built by Cys64, Cys69, Cys75, Cys90, Cys94, Cys97, and Ser304. The region spanning 76 to 293 (FGGGTATFMI…QRDGMAMGFR (218 aa)) is the Radical SAM core domain.

Belongs to the radical SAM superfamily. Lipoyl synthase family. [4Fe-4S] cluster serves as cofactor.

Its subcellular location is the cytoplasm. It catalyses the reaction [[Fe-S] cluster scaffold protein carrying a second [4Fe-4S](2+) cluster] + N(6)-octanoyl-L-lysyl-[protein] + 2 oxidized [2Fe-2S]-[ferredoxin] + 2 S-adenosyl-L-methionine + 4 H(+) = [[Fe-S] cluster scaffold protein] + N(6)-[(R)-dihydrolipoyl]-L-lysyl-[protein] + 4 Fe(3+) + 2 hydrogen sulfide + 2 5'-deoxyadenosine + 2 L-methionine + 2 reduced [2Fe-2S]-[ferredoxin]. The protein operates within protein modification; protein lipoylation via endogenous pathway; protein N(6)-(lipoyl)lysine from octanoyl-[acyl-carrier-protein]: step 2/2. Its function is as follows. Catalyzes the radical-mediated insertion of two sulfur atoms into the C-6 and C-8 positions of the octanoyl moiety bound to the lipoyl domains of lipoate-dependent enzymes, thereby converting the octanoylated domains into lipoylated derivatives. The sequence is that of Lipoyl synthase from Acidithiobacillus ferrooxidans (strain ATCC 23270 / DSM 14882 / CIP 104768 / NCIMB 8455) (Ferrobacillus ferrooxidans (strain ATCC 23270)).